Reading from the N-terminus, the 554-residue chain is MALRVAAFDLDGVLALPSIAGVLRHTEEALALPRDFLLGAFQMKFPEGPTEQLMKGKITFSQWVPLMDESCRKSSKACGASLPENFSISEIFSQAMAARSINRPMLQAAAALKKKGFTTCIVTNNWLDDSDKRDILAQMMCELSQHFDFLIESCQVGMIKPEPQIYKFVLDTLKAKPNEVVFLDDFGSNLKPARDMGMVTILVRDTASALRELEKVTGTQFPEAPLPVPCSPNDVSHGYVTVKPGIRLHFVEMGSGPAICLCHGFPESWFSWRYQIPALAQAGFRVLAIDMKGYGDSSSPPEIEEYAMELLCEEMVTFLNKLGIPQAVFIGHDWAGVLVWNMALFHPERVRAVASLNTPLMPPNPEVSPMEVIRSIPVFNYQLYFQEPGVAEAELEKNMSRTFKSFFRTSDDMGLLTVNKATEMGGILVGTPEDPKVSKITTEEEIEYYIQQFKKSGFRGPLNWYRNTERNWKWSCKALGRKILVPALMVTAEKDIVLRPEMSKNMENWIPFLKRGHIEDCGHWTQIEKPAEVNQILIKWLKTEIQNPSVTSKI.

The tract at residues 1–224 (MALRVAAFDL…KVTGTQFPEA (224 aa)) is phosphatase. Residues Asp9 and Asp11 each contribute to the Mg(2+) site. N6-succinyllysine is present on Lys55. Residue 123–124 (TN) participates in phosphate binding. At Lys176 the chain carries N6-acetyllysine; alternate. Residue Lys176 is modified to N6-succinyllysine; alternate. Asp185 is a Mg(2+) binding site. N6-acetyllysine occurs at positions 191 and 215. Residues 233–554 (NDVSHGYVTV…IQNPSVTSKI (322 aa)) are epoxide hydrolase. Residues 257–530 (PAICLCHGFP…CGHWTQIEKP (274 aa)) enclose the AB hydrolase-1 domain. The active-site Nucleophile is the Asp333. Residue Ser368 is modified to Phosphoserine. A substrate-binding site is contributed by Tyr381. Residues Lys420 and Lys454 each carry the N6-succinyllysine modification. Tyr465 functions as the Proton donor in the catalytic mechanism. N6-succinyllysine is present on Lys504. Cys521 carries the S-(15-deoxy-Delta12,14-prostaglandin J2-9-yl)cysteine lipid modification. His523 (proton acceptor) is an active-site residue. The Microbody targeting signal motif lies at 552–554 (SKI). Lys553 carries the post-translational modification N6-succinyllysine.

Belongs to the AB hydrolase superfamily. Epoxide hydrolase family. Homodimer. Requires Mg(2+) as cofactor. The covalent modification of cysteine by 15-deoxy-Delta12,14-prostaglandin-J2 is autocatalytic and reversible. It may occur as an alternative to other cysteine modifications, such as S-nitrosylation and S-palmitoylation.

Its subcellular location is the cytoplasm. The protein resides in the peroxisome. The catalysed reaction is an epoxide + H2O = an ethanediol. It carries out the reaction (9S,10S)-10-hydroxy-9-(phosphooxy)octadecanoate + H2O = (9S,10S)-9,10-dihydroxyoctadecanoate + phosphate. The enzyme catalyses 8-hydroxy-(11S,12S)-epoxy-(5Z,9E,14Z)-eicosatrienoate + H2O = (8,11R,12S)-trihydroxy-(5Z,9E,14Z)-eicosatrienoate. It catalyses the reaction 10-hydroxy-(11S,12S)-epoxy- (5Z,8Z,14Z)-eicosatrienoate + H2O = (10,11S,12R)-trihydroxy-(5Z,8Z,14Z)-eicosatrienoate. The catalysed reaction is 12-phosphooxy-(9Z)-octadecenoate + H2O = 12-hydroxy-(9Z)-octadecenoate + phosphate. It carries out the reaction 12-phosphooxy-(9E)-octadecenoate + H2O = 12-hydroxy-(9E)-octadecenoate + phosphate. The enzyme catalyses 12-(phosphooxy)octadecanoate + H2O = 12-hydroxyoctadecanoate + phosphate. It catalyses the reaction 8,9-epoxy-(5Z,11Z,14Z)-eicosatrienoate + H2O = 8,9-dihydroxy-(5Z,11Z,14Z)-eicosatrienoate. The catalysed reaction is 11,12-epoxy-(5Z,8Z,14Z)-eicosatrienoate + H2O = 11,12-dihydroxy-(5Z,8Z,14Z)-eicosatrienoate. It carries out the reaction 14,15-epoxy-(5Z,8Z,11Z)-eicosatrienoate + H2O = 14,15-dihydroxy-(5Z,8Z,11Z)-eicosatrienoate. The enzyme catalyses 9,10-epoxy-(12Z)-octadecenoate + H2O = 9,10-dihydroxy-(12Z)-octadecenoate. It catalyses the reaction 1-tetradecanoyl-sn-glycerol 3-phosphate + H2O = 1-tetradecanoyl-sn-glycerol + phosphate. The catalysed reaction is 1-octadecanoyl-sn-glycero-3-phosphate + H2O = 1-octadecanoyl-sn-glycerol + phosphate. It carries out the reaction 1-(5Z,8Z,11Z,14Z-eicosatetraenoyl)-sn-glycero-3-phosphate + H2O = 1-(5Z,8Z,11Z,14Z-eicosatetraenoyl)-sn-glycerol + phosphate. The enzyme catalyses 1-hexadecanoyl-sn-glycero-3-phosphate + H2O = 1-hexadecanoyl-sn-glycerol + phosphate. It catalyses the reaction 1-(9Z-octadecenoyl)-sn-glycero-3-phosphate + H2O = 1-(9Z-octadecenoyl)-sn-glycerol + phosphate. The catalysed reaction is (8S,9R)-epoxy-(5Z,11Z,14Z)-eicosatrienoate + H2O = (8S,9S)-dihydroxy-(5Z,11Z,14Z)-eicosatrienoate. It carries out the reaction (11S,12R)-epoxy-(5Z,8Z,14Z)-eicosatrienoate + H2O = (11R,12R)-dihydroxy-(5Z,8Z,14Z)-eicosatrienoate. The enzyme catalyses (11S,12R)-epoxy-(5Z,8Z,14Z)-eicosatrienoate + H2O = (11S,12S)-dihydroxy-(5Z,8Z,14Z)-eicosatrienoate. It catalyses the reaction (14S,15R)-epoxy-(5Z,8Z,11Z)-eicosatrienoate + H2O = (14R,15R)-dihydroxy-(5Z,8Z,11Z)-eicosatrienoate. The catalysed reaction is (14S,15R)-epoxy-(5Z,8Z,11Z)-eicosatrienoate + H2O = (14S,15S)-dihydroxy-(5Z,8Z,11Z)-eicosatrienoate. It carries out the reaction (11R,12S)-epoxy-(5Z,8Z,14Z)-eicosatrienoate + H2O = (11S,12S)-dihydroxy-(5Z,8Z,14Z)-eicosatrienoate. The enzyme catalyses (11R,12S)-epoxy-(5Z,8Z,14Z)-eicosatrienoate + H2O = (11R,12R)-dihydroxy-(5Z,8Z,14Z)-eicosatrienoate. It catalyses the reaction (8S,9R)-epoxy-(5Z,11Z,14Z)-eicosatrienoate + H2O = (8R,9R)-dihydroxy-(5Z,11Z,14Z)-eicosatrienoate. The catalysed reaction is (14R,15S)-epoxy-(5Z,8Z,11Z)-eicosatrienoate + H2O = (14R,15R)-dihydroxy-(5Z,8Z,11Z)-eicosatrienoate. With respect to regulation, inhibited by 1-(1-acetylpiperidin-4-yl)-3-(4-(trifl uoromethoxy)phenyl)urea (TPAU), 1-cyclohexyl-3-dodecylurea (CDU), 12-(3-adamantan-1-yl-ureido)-dodecanoic acid (AUDA), 1-((3S, 5S, 7S)-adamantan-1-yl)-3-(5-(2-(2-ethoxyethoxy) ethoxy)pentyl)urea (AEPU), N-adamantyl-N[']-cyclohexyl urea (ACU), 4-(((1S, 4S)-4-(3-((3S, 5S, 7S)-adamantan-1-yl) ureido)cyclohexyl)oxy)benzoic acid (c-AUCB), 4-(((1R, 4R)-4-(3-((3S, 5S, 7S)-adamantan-1-yl)ureido)cyclohexyl)oxy)benzoic acid (t-AUCB), 4-(((1R, 4R)-4-(3-(4(trifluoromethoxy)phenyl)ureido)cyclohexyl)oxy)benzoic acid (t-TAUCB) and to a lesser extent by 8-(3-((3S, 5S, 7S)-adamantan-1-yl)ureido) octanoic acid (AUOA). Phosphatase activity is inhibited by dodecyl-phosphate, phospholipids such as phospho-lysophosphatidic acids and fatty acids such as palmitic acid and lauric acid. In terms of biological role, bifunctional enzyme. The C-terminal domain has epoxide hydrolase activity and acts on epoxides (alkene oxides, oxiranes) and arene oxides. Plays a role in xenobiotic metabolism by degrading potentially toxic epoxides. Also determines steady-state levels of physiological mediators. The N-terminal domain has lipid phosphatase activity, with the highest activity towards threo-9,10-phosphonooxy-hydroxy-octadecanoic acid, followed by erythro-9,10-phosphonooxy-hydroxy-octadecanoic acid, 12-phosphonooxy-octadec-9Z-enoic acid and 12-phosphonooxy-octadec-9E-enoic acid. Functionally, bifunctional enzyme. The C-terminal domain has epoxide hydrolase activity and acts on epoxides (alkene oxides, oxiranes) and arene oxides. Plays a role in xenobiotic metabolism by degrading potentially toxic epoxides. Also determines steady-state levels of physiological mediators. Its function is as follows. Bifunctional enzyme. The N-terminal domain has lipid phosphatase activity, with the highest activity towards threo-9,10-phosphonooxy-hydroxy-octadecanoic acid, followed by erythro-9,10-phosphonooxy-hydroxy-octadecanoic acid, 12-phosphonooxy-octadec-9Z-enoic acid and 12-phosphonooxy-octadec-9E-enoic acid. Has phosphatase activity toward lyso-glycerophospholipids with also some lower activity toward lysolipids of sphingolipid and isoprenoid phosphates. The sequence is that of Bifunctional epoxide hydrolase 2 from Rattus norvegicus (Rat).